The sequence spans 86 residues: Omega-theraphotoxin-Hhn1a 1 (86 aa).

A signal peptide spans 1–21; sequence MKSIVFVALFGLALLAVVCSA. Positions 22-50 are excised as a propeptide; sequence SEDAHKELLKEVVRAMVVDKTDAVQAEER. Cystine bridges form between C52/C66, C59/C71, and C65/C78.

It belongs to the neurotoxin 10 (Hwtx-1) family. 17 (Hntx-9) subfamily. In terms of tissue distribution, expressed by the venom gland.

Its subcellular location is the secreted. In terms of biological role, ion channel inhibitor. In Cyriopagopus hainanus (Chinese bird spider), this protein is Omega-theraphotoxin-Hhn1a 1.